The following is a 414-amino-acid chain: Protein FAM81B (414 aa).

The span at 1–13 (MTSETDINKSASP) shows a compositional bias: polar residues. The tract at residues 1 to 43 (MTSETDINKSASPTAAAKEQPEEPDGPLPGSASEQEKKVRFSP) is disordered. Coiled-coil stretches lie at residues 70–94 (NTQR…LEQA), 121–149 (LLEN…QIKA), 188–223 (KLSG…NLDT), and 266–414 (LNLY…LQES).

The protein belongs to the FAM81 family.

The protein is Protein FAM81B (FAM81B) of Bos taurus (Bovine).